Reading from the N-terminus, the 289-residue chain is ATP synthase gamma chain (289 aa).

Belongs to the ATPase gamma chain family. F-type ATPases have 2 components, CF(1) - the catalytic core - and CF(0) - the membrane proton channel. CF(1) has five subunits: alpha(3), beta(3), gamma(1), delta(1), epsilon(1). CF(0) has three main subunits: a, b and c.

The protein resides in the cell inner membrane. Its function is as follows. Produces ATP from ADP in the presence of a proton gradient across the membrane. The gamma chain is believed to be important in regulating ATPase activity and the flow of protons through the CF(0) complex. This Cereibacter sphaeroides (strain ATCC 17025 / ATH 2.4.3) (Rhodobacter sphaeroides) protein is ATP synthase gamma chain.